A 208-amino-acid polypeptide reads, in one-letter code: CASP-like protein 3A1 (208 aa).

2 stretches are compositionally biased toward polar residues: residues 1 to 11 and 17 to 33; these read MGSFANGQNGS and TPAT…TTSA. The segment at 1–33 is disordered; the sequence is MGSFANGQNGSELGIQTPATGSNAALEPPTTSA. Topologically, residues 1-43 are cytoplasmic; sequence MGSFANGQNGSELGIQTPATGSNAALEPPTTSAAAPRCPRLGM. The chain crosses the membrane as a helical span at residues 44-64; the sequence is AMVAARAAALVMALLSVSLMV. Topologically, residues 65–92 are extracellular; the sequence is SAKQRGTLAIFGIEIPLYAKWSLSDSLQ. Residues 93–113 traverse the membrane as a helical segment; that stretch reads SLVGISAAAAAYSLAQLLSIA. At 114 to 128 the chain is on the cytoplasmic side; that stretch reads HTALKKAPVVPSRRY. The chain crosses the membrane as a helical span at residues 129–149; sequence AWMLLAGDQVFAYAMLSAGSA. The Extracellular segment spans residues 150 to 183; sequence AAAVANLNRTGVRHTALPNFCKPLPRFCDLSAAS. N-linked (GlcNAc...) asparagine glycosylation occurs at N157. The helical transmembrane segment at 184–204 threads the bilayer; the sequence is IACAFLGCAFLAASAVIDVIW. Topologically, residues 205-208 are cytoplasmic; it reads LSRL.

The protein belongs to the Casparian strip membrane proteins (CASP) family. Homodimer and heterodimers.

Its subcellular location is the cell membrane. The protein is CASP-like protein 3A1 of Hordeum vulgare subsp. vulgare (Domesticated barley).